The following is a 438-amino-acid chain: Probable imidazolonepropionase (438 aa).

Residues Y159 and H192 each coordinate 4-imidazolone-5-propanoate. Y159 provides a ligand contact to N-formimidoyl-L-glutamate. H260 lines the Fe(3+) pocket. H260 lines the Zn(2+) pocket. E263 serves as a coordination point for 4-imidazolone-5-propanoate. D334 provides a ligand contact to Fe(3+). D334 is a binding site for Zn(2+). N336 is a binding site for N-formimidoyl-L-glutamate.

It belongs to the metallo-dependent hydrolases superfamily. HutI family. It depends on Zn(2+) as a cofactor. Fe(3+) is required as a cofactor.

It catalyses the reaction 4-imidazolone-5-propanoate + H2O = N-formimidoyl-L-glutamate. The protein operates within amino-acid degradation; L-histidine degradation into L-glutamate; N-formimidoyl-L-glutamate from L-histidine: step 3/3. This chain is Probable imidazolonepropionase (amdhd1), found in Xenopus laevis (African clawed frog).